The chain runs to 298 residues: Transcription factor BOA (298 aa).

3 disordered regions span residues 1–26 (MGKEVMVSDYGDDDGEDAGGGDEYRI), 79–143 (LRSS…KRPR), and 206–232 (EDPYSSSDQLFSSTPVPPQSFQDGGGS). Residues 10 to 20 (YGDDDGEDAGG) are compositionally biased toward acidic residues. The segment covering 104 to 113 (DPKKQKKSDG) has biased composition (basic and acidic residues). Over residues 122–131 (STAEEGDSGP) the composition is skewed to acidic residues. Residues 138 to 197 (TSKRPRLVWTPQLHKRFVDVVAHLGIKNAVPKTIMQLMNVEGLTRENVASHLQKYRLYLK) constitute a DNA-binding region (myb-like GARP). Residues 209–227 (YSSSDQLFSSTPVPPQSFQ) are compositionally biased toward polar residues.

It localises to the nucleus. Its function is as follows. Transcription factor that is a critical component of the regulatory circuit of the circadian clock. Binds to specific sites on CCA1 promoter leading to CCA1 activation. Is required for the rhythmic expression of other clock genes such as LHY, GI and APRR1/TOC1. This is Transcription factor BOA (BOA) from Arabidopsis thaliana (Mouse-ear cress).